Consider the following 457-residue polypeptide: Argininosuccinate lyase (457 aa).

It belongs to the lyase 1 family. Argininosuccinate lyase subfamily.

Its subcellular location is the cytoplasm. The enzyme catalyses 2-(N(omega)-L-arginino)succinate = fumarate + L-arginine. The protein operates within amino-acid biosynthesis; L-arginine biosynthesis; L-arginine from L-ornithine and carbamoyl phosphate: step 3/3. This chain is Argininosuccinate lyase, found in Shigella sonnei (strain Ss046).